The chain runs to 343 residues: GTPase Obg (343 aa).

One can recognise an Obg domain in the interval 1 to 159; sequence MQFIDHATIC…RQLRLELKLL (159 aa). The OBG-type G domain occupies 160-328; sequence AEVGLIGLPN…LLRLVWQWLD (169 aa). GTP-binding positions include 166–173, 191–195, 213–216, 280–283, and 309–311; these read GLPNAGKS, FTTLV, DIPG, NKID, and SSA. Residues Ser-173 and Thr-193 each contribute to the Mg(2+) site.

The protein belongs to the TRAFAC class OBG-HflX-like GTPase superfamily. OBG GTPase family. As to quaternary structure, monomer. Mg(2+) is required as a cofactor.

Its subcellular location is the cytoplasm. Functionally, an essential GTPase which binds GTP, GDP and possibly (p)ppGpp with moderate affinity, with high nucleotide exchange rates and a fairly low GTP hydrolysis rate. Plays a role in control of the cell cycle, stress response, ribosome biogenesis and in those bacteria that undergo differentiation, in morphogenesis control. This chain is GTPase Obg, found in Synechococcus elongatus (strain ATCC 33912 / PCC 7942 / FACHB-805) (Anacystis nidulans R2).